Consider the following 293-residue polypeptide: Extracellular metalloprotease PODANS_2_14170 (293 aa).

An N-terminal signal peptide occupies residues methionine 1 to alanine 18. Residue asparagine 60 is glycosylated (N-linked (GlcNAc...) asparagine). Position 206 (histidine 206) interacts with Zn(2+). Glutamate 207 is an active-site residue. Histidine 210 contributes to the Zn(2+) binding site. Cysteine 242 and cysteine 269 form a disulfide bridge.

It belongs to the peptidase M43B family.

The protein localises to the secreted. Functionally, secreted metalloproteinase that allows assimilation of proteinaceous substrates. This is Extracellular metalloprotease PODANS_2_14170 from Podospora anserina (strain S / ATCC MYA-4624 / DSM 980 / FGSC 10383) (Pleurage anserina).